The following is a 147-amino-acid chain: D-aminoacyl-tRNA deacylase (147 aa).

Positions 136-137 (GP) match the Gly-cisPro motif, important for rejection of L-amino acids motif.

This sequence belongs to the DTD family. Homodimer.

The protein localises to the cytoplasm. The catalysed reaction is glycyl-tRNA(Ala) + H2O = tRNA(Ala) + glycine + H(+). The enzyme catalyses a D-aminoacyl-tRNA + H2O = a tRNA + a D-alpha-amino acid + H(+). Functionally, an aminoacyl-tRNA editing enzyme that deacylates mischarged D-aminoacyl-tRNAs. Also deacylates mischarged glycyl-tRNA(Ala), protecting cells against glycine mischarging by AlaRS. Acts via tRNA-based rather than protein-based catalysis; rejects L-amino acids rather than detecting D-amino acids in the active site. By recycling D-aminoacyl-tRNA to D-amino acids and free tRNA molecules, this enzyme counteracts the toxicity associated with the formation of D-aminoacyl-tRNA entities in vivo and helps enforce protein L-homochirality. In Streptococcus agalactiae serotype Ia (strain ATCC 27591 / A909 / CDC SS700), this protein is D-aminoacyl-tRNA deacylase.